Consider the following 264-residue polypeptide: tRNA1(Val) (adenine(37)-N6)-methyltransferase (264 aa).

The protein belongs to the methyltransferase superfamily. tRNA (adenine-N(6)-)-methyltransferase family.

The protein localises to the cytoplasm. It carries out the reaction adenosine(37) in tRNA1(Val) + S-adenosyl-L-methionine = N(6)-methyladenosine(37) in tRNA1(Val) + S-adenosyl-L-homocysteine + H(+). Functionally, specifically methylates the adenine in position 37 of tRNA(1)(Val) (anticodon cmo5UAC). The protein is tRNA1(Val) (adenine(37)-N6)-methyltransferase of Shewanella pealeana (strain ATCC 700345 / ANG-SQ1).